Consider the following 283-residue polypeptide: Ribose-phosphate pyrophosphokinase (283 aa).

ATP-binding positions include 34–36 (DGE) and 89–90 (RQ). Mg(2+)-binding residues include His-120 and Asp-159. Lys-182 is an active-site residue. 2 residues coordinate D-ribose 5-phosphate: Arg-184 and Asp-208.

This sequence belongs to the ribose-phosphate pyrophosphokinase family. Class III (archaeal) subfamily. It depends on Mg(2+) as a cofactor.

The protein resides in the cytoplasm. The enzyme catalyses D-ribose 5-phosphate + ATP = 5-phospho-alpha-D-ribose 1-diphosphate + AMP + H(+). It participates in metabolic intermediate biosynthesis; 5-phospho-alpha-D-ribose 1-diphosphate biosynthesis; 5-phospho-alpha-D-ribose 1-diphosphate from D-ribose 5-phosphate (route I): step 1/1. Functionally, involved in the biosynthesis of the central metabolite phospho-alpha-D-ribosyl-1-pyrophosphate (PRPP) via the transfer of pyrophosphoryl group from ATP to 1-hydroxyl of ribose-5-phosphate (Rib-5-P). This Methanosarcina acetivorans (strain ATCC 35395 / DSM 2834 / JCM 12185 / C2A) protein is Ribose-phosphate pyrophosphokinase.